The following is a 65-amino-acid chain: MPKMKTKSSAKKRFKVRSSGGIKRSQAFKRHILTKKTTKSKRQLRGMTEVHASDEKLIRAMLPYA.

The span at Met-1–Val-16 shows a compositional bias: basic residues. Residues Met-1–Gln-26 are disordered.

It belongs to the bacterial ribosomal protein bL35 family.

The polypeptide is Large ribosomal subunit protein bL35 (Azoarcus sp. (strain BH72)).